Here is a 277-residue protein sequence, read N- to C-terminus: Bifunctional protein FolD (277 aa).

NADP(+)-binding positions include 164–166, S189, and T230; that span reads GRS.

Belongs to the tetrahydrofolate dehydrogenase/cyclohydrolase family. Homodimer.

The enzyme catalyses (6R)-5,10-methylene-5,6,7,8-tetrahydrofolate + NADP(+) = (6R)-5,10-methenyltetrahydrofolate + NADPH. It carries out the reaction (6R)-5,10-methenyltetrahydrofolate + H2O = (6R)-10-formyltetrahydrofolate + H(+). It functions in the pathway one-carbon metabolism; tetrahydrofolate interconversion. Catalyzes the oxidation of 5,10-methylenetetrahydrofolate to 5,10-methenyltetrahydrofolate and then the hydrolysis of 5,10-methenyltetrahydrofolate to 10-formyltetrahydrofolate. The polypeptide is Bifunctional protein FolD (Clostridium perfringens (strain 13 / Type A)).